Here is an 834-residue protein sequence, read N- to C-terminus: Meiotic sister-chromatid recombination protein 3 (834 aa).

Disordered stretches follow at residues 75 to 136, 251 to 291, 343 to 378, and 458 to 479; these read PAAA…QPRT, EETE…TGSL, RKLAQPQQGQNQRRTVSFTQGSIDHMNTTKKKKQPL, and VRRSKSMTGSAVPPQAGKKKLT. Over residues 343-368 the composition is skewed to polar residues; it reads RKLAQPQQGQNQRRTVSFTQGSIDHM.

The protein localises to the cell membrane. May be involved in the control of meiotic sister-chromatid recombination. This chain is Meiotic sister-chromatid recombination protein 3 (MSC3), found in Candida glabrata (strain ATCC 2001 / BCRC 20586 / JCM 3761 / NBRC 0622 / NRRL Y-65 / CBS 138) (Yeast).